A 276-amino-acid polypeptide reads, in one-letter code: C-type lectin domain family 12 member B (276 aa).

Residues 1–43 (MSEEVTYATLTFQDSAGARNNRDGNNLRKRGHPAPSPIWRHAA) are Cytoplasmic-facing. Residues 5 to 10 (VTYATL) carry the ITIM motif motif. Tyr-7 is modified (phosphotyrosine). The helical; Signal-anchor for type II membrane protein transmembrane segment at 44 to 64 (LGLVTLCLMLLIGLVTLGMMF) threads the bilayer. Topologically, residues 65-276 (LQISNDINSD…AAPVKTEDLD (212 aa)) are extracellular. 3 N-linked (GlcNAc...) asparagine glycosylation sites follow: Asn-91, Asn-176, and Asn-237. The C-type lectin domain maps to 150 to 264 (YQNSCYYFTT…CSAEIFWICE (115 aa)). Cystine bridges form between Cys-172-Cys-263 and Cys-242-Cys-255.

In terms of assembly, homodimer. Interacts (via ITIM motif) with PTPN6. Interacts (via ITIM motif) with PTPN11; this interaction triggers dephosphorylation and activation of PTPN11. Post-translationally, N-glycosylated. Detected in colon, heart, kidney, liver, lung, mammary gland, ovary, spleen and testis. Expressed in melanocytes (at protein level).

The protein localises to the cell membrane. In terms of biological role, inhibitory receptor postulated to negatively regulate immune and non-immune functions. Upon phosphorylation, recruits SH2 domain-containing PTPN6 and PTPN11 phosphatases to its ITIM motif and antagonizes activation signals. Although it inhibits KLRK1/NKG2D-mediated signaling, it does not bind known ligands of KLRK1/NKG2D and therefore is not its inhibitory counterpart. May limit activation of myeloid cell subsets in response to infection or tissue inflammation. May protect target cells against natural killer cell-mediated lysis. May negatively regulate cell cycle and differentiation of melanocytes via inactivation of STAT3. In Homo sapiens (Human), this protein is C-type lectin domain family 12 member B.